A 335-amino-acid polypeptide reads, in one-letter code: Succinylglutamate desuccinylase (335 aa).

Zn(2+) is bound by residues His-59, Glu-62, and His-151. Glu-215 is a catalytic residue.

This sequence belongs to the AspA/AstE family. Succinylglutamate desuccinylase subfamily. Zn(2+) is required as a cofactor.

It carries out the reaction N-succinyl-L-glutamate + H2O = L-glutamate + succinate. It participates in amino-acid degradation; L-arginine degradation via AST pathway; L-glutamate and succinate from L-arginine: step 5/5. Functionally, transforms N(2)-succinylglutamate into succinate and glutamate. The sequence is that of Succinylglutamate desuccinylase from Pseudomonas syringae pv. tomato (strain ATCC BAA-871 / DC3000).